The chain runs to 183 residues: Small ribosomal subunit protein bS16 (183 aa).

Over residues 149-161 (EKKAAEAAAKAEA) the composition is skewed to basic and acidic residues. Positions 149–183 (EKKAAEAAAKAEAEAANAPAEEAPAAEATEAPAEA) are disordered. The segment covering 162 to 183 (EAANAPAEEAPAAEATEAPAEA) has biased composition (low complexity).

The protein belongs to the bacterial ribosomal protein bS16 family.

The polypeptide is Small ribosomal subunit protein bS16 (Phocaeicola vulgatus (strain ATCC 8482 / DSM 1447 / JCM 5826 / CCUG 4940 / NBRC 14291 / NCTC 11154) (Bacteroides vulgatus)).